The chain runs to 507 residues: Cytochrome P450 monooxygenase nodZ (507 aa).

2 helical membrane passes run Met-1–Leu-21 and Gly-205–Leu-225. A glycan (N-linked (GlcNAc...) asparagine) is linked at Asn-352. Residue Cys-445 participates in heme binding.

This sequence belongs to the cytochrome P450 family. Requires heme as cofactor.

The protein localises to the membrane. The protein operates within secondary metabolite biosynthesis. Functionally, cytochrome P450 monooxygenase; part of the gene cluster that mediates the biosynthesis of the indole diterpenes nodulisporic acids (NA). Nodulisporic acid A (NAA) and its chemically modified derivatives are of particular significance because of their highly potent insecticidal activity against blood-feeding arthropods and lack of observable adverse effects on mammals, in particular the tremogenicity associated with the paspaline-derived IDTs is not observed. The geranylgeranyl diphosphate (GGPP) synthase ggs1, localized outside of the cluster, is proposed to catalyze the first step in nodulisporic acid biosynthesis via conversion of farnesyl pyrophosphate and isopentyl pyrophosphate into geranylgeranyl pyrophosphate (GGPP). Condensation of indole-3-glycerol phosphate with GGPP by the prenyl transferase nodC then forms 3-geranylgeranylindole (3-GGI). Epoxidation by the FAD-dependent monooxygenase nodM leads to a single-epoxidized-GGI that is substrate of the terpene cyclase nodB for cyclization to yield emindole SB. The terminal methyl carbon, C28, of emindole SB is then oxidized by the cytochrome P450 monooxygenase nodW to produce nodulisporic acid F (NAF), the pentacyclic core of NAA. NAF is converted to nodulisporic acid E (NAE) via prenylation. This step is probably performed by one of the indole diterpene prenyltransferases nodD1 or nodD2. Several oxidation steps performed by the FAD-linked oxidoreductase nodO and one of the cytochrome P450 monooxygenase nodR, nodX or nodZ further convert NAE to nodulisporic acid D (NAD). NAD is substrate of cytochrome P450 monooxygenase nodJ to produce the precursor of nodulisporic acid C (NAC), converted to NAC by one of the indole diterpene prenyltransferases nodD1 or nodD2. The FAD-dependent monooxygenase nodY2 then oxidizes NAC to nodulisporic acid B (NAB). Finally NAB is converted to NAA by one of the cytochrome P450 monooxygenases nodR, nodX or nodZ. The sequence is that of Cytochrome P450 monooxygenase nodZ from Hypoxylon pulicicidum.